The primary structure comprises 269 residues: Phosphate import ATP-binding protein PstB 1 (269 aa).

In terms of domain architecture, ABC transporter spans 25–264; the sequence is LSTEDLHVFY…PQVDLTNDYI (240 aa). Position 57–64 (57–64) interacts with ATP; sequence GPSGSGKS.

The protein belongs to the ABC transporter superfamily. Phosphate importer (TC 3.A.1.7) family. The complex is composed of two ATP-binding proteins (PstB), two transmembrane proteins (PstC and PstA) and a solute-binding protein (PstS).

The protein resides in the cell membrane. It catalyses the reaction phosphate(out) + ATP + H2O = ADP + 2 phosphate(in) + H(+). In terms of biological role, part of the ABC transporter complex PstSACB involved in phosphate import. Responsible for energy coupling to the transport system. The sequence is that of Phosphate import ATP-binding protein PstB 1 from Lactiplantibacillus plantarum (strain ATCC BAA-793 / NCIMB 8826 / WCFS1) (Lactobacillus plantarum).